Here is a 358-residue protein sequence, read N- to C-terminus: Methylthioribose-1-phosphate isomerase (358 aa).

Substrate is bound by residues 54 to 56, Arg96, and Gln205; that span reads RGA. The active-site Proton donor is the Asp246. 256–257 is a substrate binding site; sequence NK.

The protein belongs to the eIF-2B alpha/beta/delta subunits family. MtnA subfamily.

It catalyses the reaction 5-(methylsulfanyl)-alpha-D-ribose 1-phosphate = 5-(methylsulfanyl)-D-ribulose 1-phosphate. The protein operates within amino-acid biosynthesis; L-methionine biosynthesis via salvage pathway; L-methionine from S-methyl-5-thio-alpha-D-ribose 1-phosphate: step 1/6. In terms of biological role, catalyzes the interconversion of methylthioribose-1-phosphate (MTR-1-P) into methylthioribulose-1-phosphate (MTRu-1-P). This chain is Methylthioribose-1-phosphate isomerase, found in Pseudomonas paraeruginosa (strain DSM 24068 / PA7) (Pseudomonas aeruginosa (strain PA7)).